A 200-amino-acid chain; its full sequence is Superoxide dismutase [Mn] (200 aa).

His-27, His-77, Asp-160, and His-164 together coordinate Mn(2+).

This sequence belongs to the iron/manganese superoxide dismutase family. As to quaternary structure, homodimer. The cofactor is Mn(2+).

The enzyme catalyses 2 superoxide + 2 H(+) = H2O2 + O2. In terms of biological role, destroys superoxide anion radicals which are normally produced within the cells and which are toxic to biological systems. This chain is Superoxide dismutase [Mn] (sodB), found in Rhizobium meliloti (strain 1021) (Ensifer meliloti).